Here is a 506-residue protein sequence, read N- to C-terminus: NAD(P)H-quinone oxidoreductase subunit 2 (506 aa).

Transmembrane regions (helical) follow at residues 14–34, 42–62, 79–99, 108–128, 132–152, 167–187, 206–226, 240–260, 276–296, 302–322, 330–350, 374–394, and 409–429; these read AIIP…VDLA, WAPI…ALQW, LAIA…LISW, PIGE…LLCG, LISV…LSGY, LLVG…LYGL, FITS…IAAV, PTPV…AFAI, LLFT…ALAQ, MLAY…VSGT, VLYL…VILF, LGLS…GFFG, and LLVI…ISVI.

The protein belongs to the complex I subunit 2 family. As to quaternary structure, NDH-1 can be composed of about 15 different subunits; different subcomplexes with different compositions have been identified which probably have different functions.

Its subcellular location is the cellular thylakoid membrane. It carries out the reaction a plastoquinone + NADH + (n+1) H(+)(in) = a plastoquinol + NAD(+) + n H(+)(out). The enzyme catalyses a plastoquinone + NADPH + (n+1) H(+)(in) = a plastoquinol + NADP(+) + n H(+)(out). NDH-1 shuttles electrons from an unknown electron donor, via FMN and iron-sulfur (Fe-S) centers, to quinones in the respiratory and/or the photosynthetic chain. The immediate electron acceptor for the enzyme in this species is believed to be plastoquinone. Couples the redox reaction to proton translocation, and thus conserves the redox energy in a proton gradient. Cyanobacterial NDH-1 also plays a role in inorganic carbon-concentration. The polypeptide is NAD(P)H-quinone oxidoreductase subunit 2 (Prochlorococcus marinus (strain AS9601)).